Here is a 393-residue protein sequence, read N- to C-terminus: Pinosylvin synthase (393 aa).

Position 57–60 (57–60 (KFKR)) interacts with substrate. Cysteine 167 is a catalytic residue. Residues leucine 270 and 308-310 (GGR) each bind substrate.

Belongs to the thiolase-like superfamily. Chalcone/stilbene synthases family. In terms of assembly, homodimer.

The protein resides in the cytoplasm. The enzyme catalyses (E)-cinnamoyl-CoA + 3 malonyl-CoA + 3 H(+) = (E)-pinosylvin + 4 CO2 + 4 CoA. The catalysed reaction is 3-phenylpropanoyl-CoA + 3 malonyl-CoA + 3 H(+) = dihydropinosylvin + 4 CO2 + 4 CoA. It participates in phytoalexin biosynthesis; hydropinosylvin biosynthesis. Catalyzes the production of pinosylvin from cinnamoyl-CoA and malonyl-CoA, and dihydropinosylvin from dihydrocinnamoyl-CoA. The protein is Pinosylvin synthase of Pinus sylvestris (Scotch pine).